We begin with the raw amino-acid sequence, 849 residues long: Leucine--tRNA ligase (849 aa).

The short motif at 44 to 54 (PYPSGRIHMGH) is the 'HIGH' region element. The 'KMSKS' region motif lies at 620–624 (KMSKS). Lysine 623 is an ATP binding site.

It belongs to the class-I aminoacyl-tRNA synthetase family.

It localises to the cytoplasm. It catalyses the reaction tRNA(Leu) + L-leucine + ATP = L-leucyl-tRNA(Leu) + AMP + diphosphate. This chain is Leucine--tRNA ligase, found in Sphingopyxis alaskensis (strain DSM 13593 / LMG 18877 / RB2256) (Sphingomonas alaskensis).